We begin with the raw amino-acid sequence, 313 residues long: 2-phosphoglycerate kinase (313 aa).

Residues 8 to 95 enclose the ATP-cone domain; the sequence is NKILVKDKDY…LWRRVLKKHS (88 aa).

Belongs to the 2-phosphoglycerate kinase family. A divalent metal cation is required as a cofactor.

The enzyme catalyses (2R)-2-phosphoglycerate + ATP = (2R)-2,3-bisphosphoglycerate + ADP + H(+). It functions in the pathway thermoadapter biosynthesis; cyclic 2,3-diphosphoglycerate biosynthesis; cyclic 2,3-diphosphoglycerate from 2-phospho-D-glycerate: step 1/2. Its function is as follows. Catalyzes the phosphorylation of 2-phosphoglycerate to 2,3-diphosphoglycerate. Involved in the biosynthesis of cyclic 2,3-bisphosphoglycerate, a thermoprotectant. This Methanococcus vannielii (strain ATCC 35089 / DSM 1224 / JCM 13029 / OCM 148 / SB) protein is 2-phosphoglycerate kinase.